Consider the following 305-residue polypeptide: 2-pyrone-4,6-dicarbaxylate hydrolase (305 aa).

Substrate is bound by residues histidine 32 to histidine 34, tyrosine 50, threonine 78, arginine 125, arginine 131, tyrosine 158, and histidine 182. Residue aspartate 258 is the Proton acceptor of the active site. Asparagine 263 contributes to the substrate binding site.

This sequence belongs to the metallo-dependent hydrolases superfamily. PDC hydrolase family.

It carries out the reaction 2-oxo-2H-pyran-4,6-dicarboxylate + H2O = (1E)-4-oxobut-1-ene-1,2,4-tricarboxylate + H(+). With respect to regulation, strongly inhibited by 1 mM Zn(2+), Cu(2+), Mn(2+) and Co(2+) ions. Also inhibited by 5,5'-dithiobis(2-nitrobenzoic acid) (Ellman reagent) in vitro. Involved in the degradation of aromatic compounds via the protocatechuate 4,5-cleavage pathway. Catalyzes the hydrolysis of 2-pyrone-4,6-dicarboxylate (PDC) to oxalomesaconate (OMA). Also catalyzes the reverse reaction. The sequence is that of 2-pyrone-4,6-dicarbaxylate hydrolase from Comamonas testosteroni (Pseudomonas testosteroni).